The primary structure comprises 462 residues: Alkaline phosphatase 3 (462 aa).

Residues 1-32 form the signal peptide; the sequence is MKKFPKKLLPIAVLSSIAFSSLASGSVPEASA. D52 provides a ligand contact to Mg(2+). Residue D52 coordinates Zn(2+). The Phosphoserine intermediate role is filled by S101. Mg(2+) is bound by residues T154 and E275. Positions 280, 284, 322, 323, and 419 each coordinate Zn(2+).

The protein belongs to the alkaline phosphatase family. Monomer. Mg(2+) is required as a cofactor. Zn(2+) serves as cofactor.

The catalysed reaction is a phosphate monoester + H2O = an alcohol + phosphate. This Bacillus subtilis (strain 168) protein is Alkaline phosphatase 3 (phoB).